The chain runs to 104 residues: Large ribosomal subunit protein cL38 (104 aa).

Residues 1–39 constitute a chloroplast transit peptide; it reads MASVSSIFGCGVSMAPNSSLRNKAIRTERRSACGGLLIE. A disordered region spans residues 42-76; it reads SRPQKKSTAHHMKTRPRKSRLSDRNRKPTVYAPLP. Residues 44–60 are compositionally biased toward basic residues; that stretch reads PQKKSTAHHMKTRPRKS.

It belongs to the chloroplast-specific ribosomal protein cL38 family. In terms of assembly, part of the 50S ribosomal subunit.

The protein localises to the plastid. The protein resides in the chloroplast. The chain is Large ribosomal subunit protein cL38 (PSRP6) from Pisum sativum (Garden pea).